The sequence spans 363 residues: Heat-inducible transcription repressor HrcA (363 aa).

This sequence belongs to the HrcA family.

Its function is as follows. Negative regulator of class I heat shock genes (grpE-dnaK-dnaJ and groELS operons). Prevents heat-shock induction of these operons. This is Heat-inducible transcription repressor HrcA from Rhizobium radiobacter (Agrobacterium tumefaciens).